A 402-amino-acid polypeptide reads, in one-letter code: 2,3-bisphosphoglycerate-independent phosphoglycerate mutase (402 aa).

The segment at 155 to 174 (SMVSDSDPHRENERPMEVRP) is disordered. A compositionally biased stretch (basic and acidic residues) spans 160–174 (SDPHRENERPMEVRP).

It belongs to the BPG-independent phosphoglycerate mutase family. A-PGAM subfamily.

It catalyses the reaction (2R)-2-phosphoglycerate = (2R)-3-phosphoglycerate. It participates in carbohydrate degradation; glycolysis; pyruvate from D-glyceraldehyde 3-phosphate: step 3/5. Its function is as follows. Catalyzes the interconversion of 2-phosphoglycerate and 3-phosphoglycerate. This chain is 2,3-bisphosphoglycerate-independent phosphoglycerate mutase, found in Picrophilus torridus (strain ATCC 700027 / DSM 9790 / JCM 10055 / NBRC 100828 / KAW 2/3).